Consider the following 163-residue polypeptide: ATP synthase subunit b (163 aa).

The helical transmembrane segment at 13-33 threads the bilayer; it reads SFILFVWFCMKYIWPPIIFAI.

It belongs to the ATPase B chain family. As to quaternary structure, F-type ATPases have 2 components, F(1) - the catalytic core - and F(0) - the membrane proton channel. F(1) has five subunits: alpha(3), beta(3), gamma(1), delta(1), epsilon(1). F(0) has three main subunits: a(1), b(2) and c(10-14). The alpha and beta chains form an alternating ring which encloses part of the gamma chain. F(1) is attached to F(0) by a central stalk formed by the gamma and epsilon chains, while a peripheral stalk is formed by the delta and b chains.

The protein resides in the cell membrane. F(1)F(0) ATP synthase produces ATP from ADP in the presence of a proton or sodium gradient. F-type ATPases consist of two structural domains, F(1) containing the extramembraneous catalytic core and F(0) containing the membrane proton channel, linked together by a central stalk and a peripheral stalk. During catalysis, ATP synthesis in the catalytic domain of F(1) is coupled via a rotary mechanism of the central stalk subunits to proton translocation. In terms of biological role, component of the F(0) channel, it forms part of the peripheral stalk, linking F(1) to F(0). The chain is ATP synthase subunit b from Buchnera aphidicola subsp. Schizaphis graminum (strain Sg).